Reading from the N-terminus, the 319-residue chain is Inositol phosphoceramide mannosyltransferase 1 (319 aa).

The helical transmembrane segment at 8 to 28 threads the bilayer; that stretch reads LLLKGIPICGVILLILWGYSL. N-linked (GlcNAc...) asparagine glycosylation is found at Asn-115 and Asn-198. Helical transmembrane passes span 211–231 and 279–299; these read PTVFLSAGPLFLSYQFCKYLL and VLFFAFLAAFAILFLCLRVVF.

Belongs to the glycosyltransferase 32 family.

It is found in the golgi apparatus. The protein localises to the cis-Golgi network membrane. Its subcellular location is the trans-Golgi network membrane. With imt2 and imt3, is required for the synthesis of mannosyl phosphorylinositol ceramide (MIPC). Catalyzes the addition of mannosyl to phosphorylinositol ceramide (IPC). MIPC is essential for cell morphology, cell-surface distribution of ergosterol, localization for plasma-membrane transporters, and lipid-raft-mediated endocytosis of plasma membrane proteins to the vacuole. This chain is Inositol phosphoceramide mannosyltransferase 1 (imt1), found in Schizosaccharomyces pombe (strain 972 / ATCC 24843) (Fission yeast).